Here is a 242-residue protein sequence, read N- to C-terminus: Small ribosomal subunit protein eS4 (242 aa).

One can recognise an S4 RNA-binding domain in the interval 43–106; sequence LPLMIIVRDI…GDVYRVLPDE (64 aa).

The protein belongs to the eukaryotic ribosomal protein eS4 family.

In Methanothermobacter thermautotrophicus (strain ATCC 29096 / DSM 1053 / JCM 10044 / NBRC 100330 / Delta H) (Methanobacterium thermoautotrophicum), this protein is Small ribosomal subunit protein eS4 (rps4e).